Consider the following 306-residue polypeptide: Dermonecrotic toxin LarSicTox-alphaIB1ai (306 aa).

Val-1 is a signal peptide. The propeptide occupies 2-27 (RATEKFASMYFFCHSPQSAETDVAER). The active site involves His-38. Residues Glu-58 and Asp-60 each contribute to the Mg(2+) site. The active-site Nucleophile is the His-74. Cystine bridges form between Cys-78–Cys-84 and Cys-80–Cys-223. Position 118 (Asp-118) interacts with Mg(2+). N-linked (GlcNAc...) asparagine glycosylation occurs at Asn-283.

Belongs to the arthropod phospholipase D family. Class II subfamily. The cofactor is Mg(2+). In terms of tissue distribution, expressed by the venom gland.

The protein resides in the secreted. The enzyme catalyses an N-(acyl)-sphingosylphosphocholine = an N-(acyl)-sphingosyl-1,3-cyclic phosphate + choline. The catalysed reaction is an N-(acyl)-sphingosylphosphoethanolamine = an N-(acyl)-sphingosyl-1,3-cyclic phosphate + ethanolamine. It carries out the reaction a 1-acyl-sn-glycero-3-phosphocholine = a 1-acyl-sn-glycero-2,3-cyclic phosphate + choline. It catalyses the reaction a 1-acyl-sn-glycero-3-phosphoethanolamine = a 1-acyl-sn-glycero-2,3-cyclic phosphate + ethanolamine. Its function is as follows. Dermonecrotic toxins cleave the phosphodiester linkage between the phosphate and headgroup of certain phospholipids (sphingolipid and lysolipid substrates), forming an alcohol (often choline) and a cyclic phosphate. This toxin acts on sphingomyelin (SM). It may also act on ceramide phosphoethanolamine (CPE), lysophosphatidylcholine (LPC) and lysophosphatidylethanolamine (LPE), but not on lysophosphatidylserine (LPS), and lysophosphatidylglycerol (LPG). It acts by transphosphatidylation, releasing exclusively cyclic phosphate products as second products. Induces dermonecrosis, hemolysis, increased vascular permeability, edema, inflammatory response, and platelet aggregation. This is Dermonecrotic toxin LarSicTox-alphaIB1ai from Loxosceles arizonica (Arizona brown spider).